A 449-amino-acid polypeptide reads, in one-letter code: UDP-glycosyltransferase 76E7 (449 aa).

Residues Ser275, 333-335 (APQ), 350-358 (HCGWNSTLE), and 372-375 (TTDQ) contribute to the UDP-alpha-D-glucose site.

It belongs to the UDP-glycosyltransferase family.

The protein is UDP-glycosyltransferase 76E7 (UGT76E7) of Arabidopsis thaliana (Mouse-ear cress).